Here is a 260-residue protein sequence, read N- to C-terminus: Thiazole synthase (260 aa).

The active-site Schiff-base intermediate with DXP is Lys96. Residues Gly157, Ala184–Gly185, and Asn206–Thr207 contribute to the 1-deoxy-D-xylulose 5-phosphate site.

The protein belongs to the ThiG family. As to quaternary structure, homotetramer. Forms heterodimers with either ThiH or ThiS.

The protein resides in the cytoplasm. The enzyme catalyses [ThiS sulfur-carrier protein]-C-terminal-Gly-aminoethanethioate + 2-iminoacetate + 1-deoxy-D-xylulose 5-phosphate = [ThiS sulfur-carrier protein]-C-terminal Gly-Gly + 2-[(2R,5Z)-2-carboxy-4-methylthiazol-5(2H)-ylidene]ethyl phosphate + 2 H2O + H(+). The protein operates within cofactor biosynthesis; thiamine diphosphate biosynthesis. Functionally, catalyzes the rearrangement of 1-deoxy-D-xylulose 5-phosphate (DXP) to produce the thiazole phosphate moiety of thiamine. Sulfur is provided by the thiocarboxylate moiety of the carrier protein ThiS. In vitro, sulfur can be provided by H(2)S. The sequence is that of Thiazole synthase from Nitrobacter winogradskyi (strain ATCC 25391 / DSM 10237 / CIP 104748 / NCIMB 11846 / Nb-255).